A 365-amino-acid polypeptide reads, in one-letter code: Cobalt-precorrin-5B C(1)-methyltransferase (365 aa).

The protein belongs to the CbiD family.

It carries out the reaction Co-precorrin-5B + S-adenosyl-L-methionine = Co-precorrin-6A + S-adenosyl-L-homocysteine. It functions in the pathway cofactor biosynthesis; adenosylcobalamin biosynthesis; cob(II)yrinate a,c-diamide from sirohydrochlorin (anaerobic route): step 6/10. Catalyzes the methylation of C-1 in cobalt-precorrin-5B to form cobalt-precorrin-6A. This chain is Cobalt-precorrin-5B C(1)-methyltransferase, found in Methanococcus maripaludis (strain DSM 14266 / JCM 13030 / NBRC 101832 / S2 / LL).